Consider the following 121-residue polypeptide: Small ribosomal subunit protein bS6 (121 aa).

The protein belongs to the bacterial ribosomal protein bS6 family.

Binds together with bS18 to 16S ribosomal RNA. This is Small ribosomal subunit protein bS6 from Rickettsia felis (strain ATCC VR-1525 / URRWXCal2) (Rickettsia azadi).